The primary structure comprises 166 residues: PTS system glucose-specific EIIA component (166 aa).

One can recognise a PTS EIIA type-1 domain in the interval 34-138 (DPVFAQKMMG…SVISPIIITN (105 aa)). Zn(2+)-binding residues include His-71 and His-86. The active-site Tele-phosphohistidine intermediate; for EIIA activity is His-86. The residue at position 86 (His-86) is a Phosphohistidine; by HPr.

Heterodimer with glycerol kinase (glpk). The cofactor is Zn(2+).

It is found in the cytoplasm. Functionally, the phosphoenolpyruvate-dependent sugar phosphotransferase system (sugar PTS), a major carbohydrate active transport system, catalyzes the phosphorylation of incoming sugar substrates concomitantly with their translocation across the cell membrane. The enzyme II complex composed of PtsG and Crr is involved in glucose transport. The chain is PTS system glucose-specific EIIA component (crr) from Staphylococcus aureus (strain Mu50 / ATCC 700699).